The primary structure comprises 81 residues: MPQSKQQFKRQGARQRDSKGKFVKARTGMATAPPAAVSTAAPTASTMTPTGSSTTATIGGATTGASTTTAVTGCGCNCCSH.

Residues 1–58 (MPQSKQQFKRQGARQRDSKGKFVKARTGMATAPPAAVSTAAPTASTMTPTGSSTTATI) are disordered. Over residues 30–58 (ATAPPAAVSTAAPTASTMTPTGSSTTATI) the composition is skewed to low complexity.

This is an uncharacterized protein from Caenorhabditis elegans.